The chain runs to 274 residues: MDLFMSIFTLGAITRNPAKIENASPASTVHATATIPLQATFPFGWLIVGVALLAVFQSASKVIALHRRWQLALYKGVQLVCNMLLLFVTIYSHLLLLAACMEAQFLYIYALIYILQIVSFCRFIMRCWLCWKCRSKNPLLYDANYFVCWHTNNYDYCIPYNSVTDTVVITSGDGTNQPKLKEDYQIGGYSEDWHSGVKDYVVIYGYFTEVYYQLESTQLSTDTGAENATFFIYSKLVKDVDHVQIHTIDGSSGVVNPAMDPIYDEPTTTTSVPL.

The Extracellular portion of the chain corresponds to 1 to 34 (MDLFMSIFTLGAITRNPAKIENASPASTVHATAT). O-linked (GalNAc...) serine; by host glycosylation occurs at S27. O-linked (GalNAc...) threonine; by host glycosylation is found at T28, T32, and T34. Residues 33–141 (ATIPLQATFP…KCRSKNPLLY (109 aa)) enclose the CoV 3a-like viroporin TM domain. Residues 35–55 (IPLQATFPFGWLIVGVALLAV) traverse the membrane as a helical segment. Residues 56-78 (FQSASKVIALHRRWQLALYKGVQ) lie on the Cytoplasmic side of the membrane. Residues 79-99 (LVCNMLLLFVTIYSHLLLLAA) traverse the membrane as a helical segment. Topologically, residues 100 to 104 (CMEAQ) are extracellular. The chain crosses the membrane as a helical span at residues 105 to 125 (FLYIYALIYILQIVSFCRFIM). Topologically, residues 126 to 274 (RCWLCWKCRS…EPTTTTSVPL (149 aa)) are cytoplasmic. The CoV 3a-like viroporin CD domain occupies 145–237 (YFVCWHTNNY…ATFFIYSKLV (93 aa)).

In terms of assembly, homotetramer composed of two homodimers linked non covalently. Interacts with M, S and E proteins. Also interacts with the accessory protein 7a. Exists in both O-glycosylated and non-glycosylated forms. The glycosylated form is associated with the virion.

The protein resides in the virion. The protein localises to the host Golgi apparatus membrane. It is found in the host cell membrane. Its subcellular location is the secreted. It localises to the host cytoplasm. In terms of biological role, forms homotetrameric potassium sensitive ion channels (viroporin) and may modulate virus release. Up-regulates expression of fibrinogen subunits FGA, FGB and FGG in host lung epithelial cells. Induces apoptosis in cell culture. Down-regulates the type 1 interferon receptor by inducing serine phosphorylation within the IFN alpha-receptor subunit 1 (IFNAR1) degradation motif and increasing IFNAR1 ubiquitination. The protein is Protein 3 of Rhinolophus sinicus (Chinese rufous horseshoe bat).